The chain runs to 507 residues: ATP synthase subunit alpha, chloroplastic (507 aa).

170–177 (GDRQTGKT) is an ATP binding site.

The protein belongs to the ATPase alpha/beta chains family. F-type ATPases have 2 components, CF(1) - the catalytic core - and CF(0) - the membrane proton channel. CF(1) has five subunits: alpha(3), beta(3), gamma(1), delta(1), epsilon(1). CF(0) has four main subunits: a, b, b' and c.

Its subcellular location is the plastid. It localises to the chloroplast thylakoid membrane. The enzyme catalyses ATP + H2O + 4 H(+)(in) = ADP + phosphate + 5 H(+)(out). Produces ATP from ADP in the presence of a proton gradient across the membrane. The alpha chain is a regulatory subunit. The sequence is that of ATP synthase subunit alpha, chloroplastic from Amborella trichopoda.